The following is a 204-amino-acid chain: Holliday junction branch migration complex subunit RuvA (204 aa).

The domain I stretch occupies residues Met-1–Asn-64. Positions Thr-65–Pro-143 are domain II. The segment at Phe-144–Ala-155 is flexible linker. The segment at Ser-156–Val-204 is domain III.

It belongs to the RuvA family. Homotetramer. Forms an RuvA(8)-RuvB(12)-Holliday junction (HJ) complex. HJ DNA is sandwiched between 2 RuvA tetramers; dsDNA enters through RuvA and exits via RuvB. An RuvB hexamer assembles on each DNA strand where it exits the tetramer. Each RuvB hexamer is contacted by two RuvA subunits (via domain III) on 2 adjacent RuvB subunits; this complex drives branch migration. In the full resolvosome a probable DNA-RuvA(4)-RuvB(12)-RuvC(2) complex forms which resolves the HJ.

The protein resides in the cytoplasm. The RuvA-RuvB-RuvC complex processes Holliday junction (HJ) DNA during genetic recombination and DNA repair, while the RuvA-RuvB complex plays an important role in the rescue of blocked DNA replication forks via replication fork reversal (RFR). RuvA specifically binds to HJ cruciform DNA, conferring on it an open structure. The RuvB hexamer acts as an ATP-dependent pump, pulling dsDNA into and through the RuvAB complex. HJ branch migration allows RuvC to scan DNA until it finds its consensus sequence, where it cleaves and resolves the cruciform DNA. The polypeptide is Holliday junction branch migration complex subunit RuvA (Vibrio parahaemolyticus serotype O3:K6 (strain RIMD 2210633)).